The following is a 236-amino-acid chain: Endonuclease V (236 aa).

2 residues coordinate Mg(2+): Asp47 and Asp115.

Belongs to the endonuclease V family. The cofactor is Mg(2+).

Its subcellular location is the cytoplasm. The catalysed reaction is Endonucleolytic cleavage at apurinic or apyrimidinic sites to products with a 5'-phosphate.. DNA repair enzyme involved in the repair of deaminated bases. Selectively cleaves double-stranded DNA at the second phosphodiester bond 3' to a deoxyinosine leaving behind the intact lesion on the nicked DNA. This Xanthomonas campestris pv. campestris (strain B100) protein is Endonuclease V.